Here is an 86-residue protein sequence, read N- to C-terminus: Bradykinin-potentiating peptide 25.12 (86 aa).

The first 22 residues, 1 to 22 (MNKRVLLVIFFVTLLIADEVNS), serve as a signal peptide directing secretion. Positions 67–86 (APAAAAAPEEPPVEQRRRRR) are disordered.

The protein belongs to the non-disulfide-bridged peptide (NDBP) superfamily. Long chain multifunctional peptide (group 2) family. Expressed by the venom gland.

It is found in the secreted. Functionally, inhibits angiotensin-converting enzyme (ACE), but does not serve as substrate for the enzyme. Potentiates bradykinin (BK) on the isolated guinea pig ileum as well as the isolated rat uterus for contraction. Also potentiates in vivo the depressor effect of BK on arterial blood pressure in the normotensive anesthetized rat. The polypeptide is Bradykinin-potentiating peptide 25.12 (Lychas mucronatus (Chinese swimming scorpion)).